Here is a 367-residue protein sequence, read N- to C-terminus: Zinc finger CCCH domain-containing protein 56 (367 aa).

The tract at residues 38-80 is disordered; the sequence is YNSQWNADGGGGGSSRAGSEQPPPGKKSRGGGGGEGGGNTSKS. The segment covering 67 to 76 has biased composition (gly residues); that stretch reads GGGGGEGGGN. 3 C3H1-type zinc fingers span residues 87-114, 169-197, and 245-273; these read FFKT…HGME, AYKG…HDEQ, and NWKT…HGAA.

The protein is Zinc finger CCCH domain-containing protein 56 of Oryza sativa subsp. japonica (Rice).